A 292-amino-acid polypeptide reads, in one-letter code: Peroxisomal 2,4-dienoyl-CoA reductase [(3E)-enoyl-CoA-producing] (292 aa).

NADP(+) is bound by residues 35–40, 60–64, and Asp86; these read GGGSGI and RSLPR. Arg60 contributes to the substrate binding site. Residues Arg88, Phe118, and 126–128 contribute to the substrate site; that span reads SFN. Lys151 carries the N6-acetyllysine modification. Residues Lys182 and 208–214 contribute to the NADP(+) site; that span reads PGAISGT. Position 219 (Arg219) interacts with substrate. Ser287 carries the post-translational modification Phosphoserine. The Microbody targeting signal signature appears at 290–292; it reads AKL. The residue at position 291 (Lys291) is an N6-acetyllysine.

This sequence belongs to the short-chain dehydrogenases/reductases (SDR) family. 2,4-dienoyl-CoA reductase subfamily. As to quaternary structure, monomer, dimer and oligomer.

It localises to the peroxisome. It catalyses the reaction a (2E,4Z)-dienoyl-CoA + NADPH + H(+) = a 4,5-saturated-(3E)-enoyl-CoA + NADP(+). The enzyme catalyses a (2E,4E)-dienoyl-CoA + NADPH + H(+) = a 4,5-saturated-(3E)-enoyl-CoA + NADP(+). The catalysed reaction is (2E,4E)-hexadienoyl-CoA + NADPH + H(+) = (3E)-hexenoyl-CoA + NADP(+). It carries out the reaction (2E,4E)-decadienoyl-CoA + NADPH + H(+) = (3E)-decenoyl-CoA + NADP(+). It catalyses the reaction (2E,4Z,7Z,10Z,13Z,16Z,19Z)-docosaheptaenoyl-CoA + NADPH + H(+) = (3E,7Z,10Z,13Z,16Z,19Z)-docosahexaenoyl-CoA + NADP(+). Its function is as follows. Auxiliary enzyme of beta-oxidation. Participates in the degradation of unsaturated fatty enoyl-CoA esters having double bonds in both even- and odd-numbered positions in peroxisome. Catalyzes the NADP-dependent reduction of 2,4-dienoyl-CoA to yield trans-3-enoyl-CoA. Has activity towards short and medium chain 2,4-dienoyl-CoAs, but also towards 2,4,7,10,13,16,19-docosaheptaenoyl-CoA, suggesting that it does not constitute a rate limiting step in the peroxisomal degradation of docosahexaenoic acid. This is Peroxisomal 2,4-dienoyl-CoA reductase [(3E)-enoyl-CoA-producing] (Decr2) from Rattus norvegicus (Rat).